Here is a 473-residue protein sequence, read N- to C-terminus: Ornithine decarboxylase (473 aa).

Lys106 carries the N6-(pyridoxal phosphate)lysine modification. Residues Ser240, Gly277, and Glu313–Arg316 contribute to the pyridoxal 5'-phosphate site. Phe367–Asp368 provides a ligand contact to substrate. Cys417 acts as the Proton donor; shared with dimeric partner in catalysis. Residue Asp418 participates in substrate binding. Tyr447 lines the pyridoxal 5'-phosphate pocket.

Belongs to the Orn/Lys/Arg decarboxylase class-II family. In terms of assembly, homodimer. Only the dimer is catalytically active, as the active sites are constructed of residues from both monomers. Pyridoxal 5'-phosphate is required as a cofactor.

It is found in the cytoplasm. The enzyme catalyses L-ornithine + H(+) = putrescine + CO2. The protein operates within amine and polyamine biosynthesis; putrescine biosynthesis via L-ornithine pathway; putrescine from L-ornithine: step 1/1. With respect to regulation, inhibited by antizyme (AZ) OAZ1 in response to polyamine levels. AZ inhibits the assembly of the functional homodimer by binding to ODC monomers and targeting them for ubiquitin-independent proteolytic destruction by the 26S proteasome. Functionally, catalyzes the first and rate-limiting step of polyamine biosynthesis that converts ornithine into putrescine, which is the precursor for the polyamines, spermidine and spermine. Polyamines are essential for cell proliferation and are implicated in cellular processes, ranging from DNA replication to apoptosis. The sequence is that of Ornithine decarboxylase (SPE1) from Candida albicans (strain SC5314 / ATCC MYA-2876) (Yeast).